A 112-amino-acid chain; its full sequence is DNA-binding protein Bv3F (112 aa).

A disordered region spans residues 65–92 (KRNSKRMSTVPKYRDPATGKTWSGRGRQ). 2 consecutive DNA-binding regions follow at residues 89–94 (RGRQPA) and 89–95 (RGRQPAW).

It belongs to the histone-like protein H-NS family. In terms of assembly, homodimer that oligomerizes on DNA into higher-order complexes that form bridges between disparate regions of DNA compacting it.

It is found in the cytoplasm. Its subcellular location is the nucleoid. A DNA-binding protein implicated in transcriptional repression and chromosome organization and compaction. Binds in the minor groove of AT-rich DNA. Binds nucleation sites in AT-rich DNA and bridges them, forming higher-order nucleoprotein complexes and condensing the chromosome. As many horizontally transferred genes are AT-rich, it plays a central role in silencing foreign genes. The sequence is that of DNA-binding protein Bv3F from Burkholderia vietnamiensis (strain G4 / LMG 22486) (Burkholderia cepacia (strain R1808)).